The sequence spans 507 residues: Cytochrome P450 monooxygenase helB2 (507 aa).

Positions 1–22 are cleaved as a signal peptide; that stretch reads MALPIILCLAVILWTSWRLLDA. C436 contributes to the heme binding site.

The protein belongs to the cytochrome P450 family. The cofactor is heme.

It functions in the pathway mycotoxin biosynthesis. In terms of biological role, cytochrome P450 monooxygenase; part of the gene cluster that mediates the biosynthesis of helvolic acid, an antibacterial nortriterpenoid. Protostadienol synthase helA cyclizes (3S)-oxidosqualene to (17Z)-protosta-17(20),24-dien-3-beta-ol (protostadienol). The synthesis of protostadienol is followed by several steps of monooxygenation, dehydrogenation, and acyl transfer to yield the final helvolic acid. Following the cyclization to the tetracyclic protostadienol by helA, cytochrome P450 monooxygenases helB1-mediated and helB2-mediated oxidation at C-4 and C-16, acyltransferase helD2-dependent acetylation of 16-OH, oxidation of C-21 by cytochrome P450 monooxygenase helB4, and short chain dehydrogenase helC-dependent oxidative decarboxylation yield the fusidane skeleton. This intermediate is further modified in three additional steps mediated by the cytochrome P450 monooxygenase helB3, the acyltransferase helD1, and the 3-ketosteroid 1-dehydrogenase helE to give helvolic acid. Compared with the late stages in the biosynthesis of helvolic acid, enzymes involved in the early stage modifications act in a relatively strict order. The hydroxylation of C-16 by helB1 and subsequent acetylation by helD2 should occur before the helB3-mediated oxidation of C-21. C-4 demethylation in fusidane-type antibiotics proceeds in an unusual manner though it is also achieved by oxidative decarboxylation. The methyl group at C-4 beta position is oxidized by helB1 and subsequently removed by the short chain dehydrogenase helC. The chain is Cytochrome P450 monooxygenase helB2 from Aspergillus fumigatus (strain ATCC MYA-4609 / CBS 101355 / FGSC A1100 / Af293) (Neosartorya fumigata).